Consider the following 475-residue polypeptide: Ribulose bisphosphate carboxylase large chain (475 aa).

Residues 1 to 2 (MS) constitute a propeptide that is removed on maturation. Pro3 is subject to N-acetylproline. Residue Lys14 is modified to N6,N6,N6-trimethyllysine. Substrate-binding residues include Asn123 and Thr173. Lys175 serves as the catalytic Proton acceptor. Residue Lys177 participates in substrate binding. 3 residues coordinate Mg(2+): Lys201, Asp203, and Glu204. An N6-carboxylysine modification is found at Lys201. The active-site Proton acceptor is the His294. Residues Arg295, His327, and Ser379 each contribute to the substrate site.

Belongs to the RuBisCO large chain family. Type I subfamily. In terms of assembly, heterohexadecamer of 8 large chains and 8 small chains; disulfide-linked. The disulfide link is formed within the large subunit homodimers. Mg(2+) serves as cofactor. In terms of processing, the disulfide bond which can form in the large chain dimeric partners within the hexadecamer appears to be associated with oxidative stress and protein turnover.

It localises to the plastid. Its subcellular location is the chloroplast. It carries out the reaction 2 (2R)-3-phosphoglycerate + 2 H(+) = D-ribulose 1,5-bisphosphate + CO2 + H2O. The catalysed reaction is D-ribulose 1,5-bisphosphate + O2 = 2-phosphoglycolate + (2R)-3-phosphoglycerate + 2 H(+). RuBisCO catalyzes two reactions: the carboxylation of D-ribulose 1,5-bisphosphate, the primary event in carbon dioxide fixation, as well as the oxidative fragmentation of the pentose substrate in the photorespiration process. Both reactions occur simultaneously and in competition at the same active site. The polypeptide is Ribulose bisphosphate carboxylase large chain (Castanea sativa (Sweet chestnut)).